A 189-amino-acid polypeptide reads, in one-letter code: GTP cyclohydrolase 1 (189 aa).

Zn(2+)-binding residues include Cys78, His81, and Cys150.

This sequence belongs to the GTP cyclohydrolase I family. Homomer.

The catalysed reaction is GTP + H2O = 7,8-dihydroneopterin 3'-triphosphate + formate + H(+). It functions in the pathway cofactor biosynthesis; 7,8-dihydroneopterin triphosphate biosynthesis; 7,8-dihydroneopterin triphosphate from GTP: step 1/1. In Bacillus mycoides (strain KBAB4) (Bacillus weihenstephanensis), this protein is GTP cyclohydrolase 1.